Consider the following 330-residue polypeptide: Probable WRKY transcription factor 74 (330 aa).

The WRKY DNA-binding region spans 256-322; it reads KIADIPPDEY…YEGEHNHSRI (67 aa).

The protein localises to the nucleus. In terms of biological role, transcription factor. Interacts specifically with the W box (5'-(T)TGAC[CT]-3'), a frequently occurring elicitor-responsive cis-acting element. In Arabidopsis thaliana (Mouse-ear cress), this protein is Probable WRKY transcription factor 74 (WRKY74).